We begin with the raw amino-acid sequence, 92 residues long: Small ribosomal subunit protein uS19 (92 aa).

It belongs to the universal ribosomal protein uS19 family.

Functionally, protein S19 forms a complex with S13 that binds strongly to the 16S ribosomal RNA. The polypeptide is Small ribosomal subunit protein uS19 (Sodalis glossinidius (strain morsitans)).